The chain runs to 410 residues: 2-oxoglutarate-dependent dioxygenase AOP3 (410 aa).

The Fe2OG dioxygenase domain occupies glycine 258–proline 355. Fe cation is bound by residues histidine 278, aspartate 280, and histidine 335. Arginine 346 contacts 2-oxoglutarate.

This sequence belongs to the iron/ascorbate-dependent oxidoreductase family. It depends on Fe(2+) as a cofactor.

In terms of biological role, 2-oxoglutarate-dependent dioxygenase involved in glucosinolates biosynthesis. Catalyzes the conversion of methylsulfinylalkyl glucosinolates to hydroxyalkyl glucosinolates. The sequence is that of 2-oxoglutarate-dependent dioxygenase AOP3 (AOP3) from Arabidopsis thaliana (Mouse-ear cress).